We begin with the raw amino-acid sequence, 370 residues long: Cyanuric acid amidohydrolase (370 aa).

The segment at 1 to 103 (MQAQVFRVPM…TIFTVQKTDN (103 aa)) is RU A. Substrate-binding positions include Arg51 and 82–83 (SG). An RU B region spans residues 113–250 (RLAVQQIFTR…NEIIVMGNSR (138 aa)). The active site involves Lys163. Substrate contacts are provided by residues Arg195 and 233–234 (SA). Ser233 serves as the catalytic Nucleophile. Positions 256–370 (LVIGHAEMKD…GPVAVIARTA (115 aa)) are RU C. Glu303 provides a ligand contact to Mg(2+). Substrate is bound by residues Arg330 and 349–350 (SG). Mg(2+)-binding residues include Ser352, Gln355, Gly356, Pro357, and Gly360.

Belongs to the cyclic amide hydrolase (CyAH) family. In terms of assembly, homotetramer.

The catalysed reaction is cyanurate + H2O = 1-carboxybiuret + H(+). The protein operates within xenobiotic degradation; atrazine degradation; biuret from cyanurate: step 1/1. Its activity is regulated as follows. Inhibited by barbituric acid. Responsible for the hydrolysis of cyanuric acid, an intermediate formed during catabolism of s-triazine based compounds in herbicides such as atrazine and polymers such as melamine. Catalyzes the hydrolytic opening of the s-triazine ring of cyanuric acid (2,4,6-trihydroxy-s-triazine) to yield carbon dioxide and carboxybiuret, which spontaneously decarboxylates to biuret. This chain is Cyanuric acid amidohydrolase (trzD), found in Pseudomonas sp.